The chain runs to 756 residues: 5-methyltetrahydropteroyltriglutamate--homocysteine methyltransferase (756 aa).

5-methyltetrahydropteroyltri-L-glutamate-binding positions include 15-18 (REWK) and K111. Positions 392 to 411 (GAATSHNLENKKRPQSFNER) are disordered. Basic and acidic residues predominate over residues 399–411 (LENKKRPQSFNER). L-homocysteine-binding positions include 429 to 431 (IGS) and E482. L-methionine-binding positions include 429-431 (IGS) and E482. 5-methyltetrahydropteroyltri-L-glutamate-binding positions include 513-514 (RC) and W559. L-homocysteine is bound at residue D597. D597 lines the L-methionine pocket. E603 contacts 5-methyltetrahydropteroyltri-L-glutamate. Zn(2+) is bound by residues H639, C641, and E663. Residue H692 is the Proton donor of the active site. A Zn(2+)-binding site is contributed by C724.

The protein belongs to the vitamin-B12 independent methionine synthase family. Requires Zn(2+) as cofactor.

It catalyses the reaction 5-methyltetrahydropteroyltri-L-glutamate + L-homocysteine = tetrahydropteroyltri-L-glutamate + L-methionine. Its pathway is amino-acid biosynthesis; L-methionine biosynthesis via de novo pathway; L-methionine from L-homocysteine (MetE route): step 1/1. Functionally, catalyzes the transfer of a methyl group from 5-methyltetrahydrofolate to homocysteine resulting in methionine formation. This is 5-methyltetrahydropteroyltriglutamate--homocysteine methyltransferase from Halalkalibacterium halodurans (strain ATCC BAA-125 / DSM 18197 / FERM 7344 / JCM 9153 / C-125) (Bacillus halodurans).